The primary structure comprises 281 residues: NAC domain-containing protein 6 (281 aa).

Residues 4 to 156 (LPVGSRFCPT…QDALTGFADQ (153 aa)) enclose the NAC domain. Disordered stretches follow at residues 84 to 109 (GGSE…QKGD) and 211 to 249 (LEGH…VTQE). Residues 94–109 (NDGKKEIKDGHMQKGD) show a composition bias toward basic and acidic residues. The DNA-binding element occupies 109–162 (DGLRASDDLQKVVLCRIRYKKEANVNEFGLVNHQAHQTQDALTGFADQLEMMLE). The segment covering 229 to 239 (QQQQQQQQQQQ) has biased composition (low complexity).

The protein localises to the nucleus. This Arabidopsis thaliana (Mouse-ear cress) protein is NAC domain-containing protein 6 (NAC006).